A 216-amino-acid polypeptide reads, in one-letter code: Endo-1,4-beta-xylanase 1 (216 aa).

An N-terminal signal peptide occupies residues 1 to 19 (MFLTSVVSLVVGAISCVSA). The GH11 domain maps to 29–216 (QMTPRNSCYG…SSGSASITVS (188 aa)). E112 serves as the catalytic Nucleophile. The active-site Proton donor is E203.

The protein belongs to the glycosyl hydrolase 11 (cellulase G) family.

Its subcellular location is the secreted. The enzyme catalyses Endohydrolysis of (1-&gt;4)-beta-D-xylosidic linkages in xylans.. It functions in the pathway glycan degradation; xylan degradation. In terms of biological role, endo-1,4-beta-xylanase involved in the hydrolysis of xylan, a major structural heterogeneous polysaccharide found in plant biomass representing the second most abundant polysaccharide in the biosphere, after cellulose. In Claviceps purpurea (Ergot fungus), this protein is Endo-1,4-beta-xylanase 1 (xyl1).